The following is a 75-amino-acid chain: U6-lycotoxin-Ls1d (75 aa).

The N-terminal stretch at 1–21 (MKLLLFTALVLVVISLVEVEA) is a signal peptide. Positions 22–25 (ENER) are excised as a propeptide.

It belongs to the neurotoxin 19 (CSTX) family. 06 (U6-Lctx) subfamily. Post-translationally, contains 4 disulfide bonds. As to expression, expressed by the venom gland.

Its subcellular location is the secreted. This is U6-lycotoxin-Ls1d from Lycosa singoriensis (Wolf spider).